We begin with the raw amino-acid sequence, 360 residues long: MKTSMQSKLDQLTTRLAELNDLLSRENVTADLDQYRKLTREHAEIGPVVEHYAQWRQARADELAAQELLADASMRDFAEDELRGARDRMGRLAAELQTMLLPKDPNDERNIFVEIRAGTGGDESALFAGNLLRMYLRYAERQRWQVEMMSESPSDLGGYKEVIVRIAGYGAYSRLKFESGGHRVQRVPATETQGRIHTSACTVAVMPEADEIGEVEINPADLRIDTFRASGAGGQHINKTDSAVRVTHIPTGIVVECQDDRSQHKNKDRALKVLAARIKDKQYHEQHAKEAATRKSLIGSGDRSERIRTYNFPQGRMTDHRINLTLYKLEQIMDGDLDELIAALVSEHQAELLASLGDAE.

At glutamine 235 the chain carries N5-methylglutamine.

Belongs to the prokaryotic/mitochondrial release factor family. In terms of processing, methylated by PrmC. Methylation increases the termination efficiency of RF1.

It localises to the cytoplasm. Peptide chain release factor 1 directs the termination of translation in response to the peptide chain termination codons UAG and UAA. The sequence is that of Peptide chain release factor 1 from Burkholderia mallei (strain NCTC 10247).